We begin with the raw amino-acid sequence, 211 residues long: TVQGFDISSYQPSVNFAGAYSAGARFVIIKATEGTSYTNPSFSSQYNGATTATGNYFIRGGYHFAHPGETTGAAQADYFIAHGGGWSGDGITLPGMLDLESEGSNPACWGLSAASMVAWIKAFSDRYHAVTGRYPMLYTNPSWWSSCTGNSNAFVNTNPLVLANRYASAPGTIPGGWPYQTIWQNSDAYAYGGSNNFINGSIDNLKKLATG.

Catalysis depends on residues Asp6 and Glu100. A disulfide bridge connects residues Cys108 and Cys147.

This sequence belongs to the glycosyl hydrolase 25 family.

The protein localises to the secreted. The protein resides in the extracellular space. The catalysed reaction is Hydrolysis of (1-&gt;4)-beta-linkages between N-acetylmuramic acid and N-acetyl-D-glucosamine residues in a peptidoglycan and between N-acetyl-D-glucosamine residues in chitodextrins.. This enzyme has both lysozyme (acetylmuramidase) and diacetylmuramidase activities. This Chalaropsis sp protein is N,O-diacetylmuramidase.